The primary structure comprises 126 residues: MSIPADLKYTESHEWVRTEADGTLTVGITDHAQEALGDIVFFEVQELGKTVTAGDTVAVIESVKAASDIYAPVSGEIIEANTAVADTPDSVNSTPYESWLFKIKPAADATQDRLIDADAYTKSIGA.

One can recognise a Lipoyl-binding domain in the interval threonine 23–lysine 104. Lysine 64 carries the N6-lipoyllysine modification.

Belongs to the GcvH family. The glycine cleavage system is composed of four proteins: P, T, L and H. The cofactor is (R)-lipoate.

Functionally, the glycine cleavage system catalyzes the degradation of glycine. The H protein shuttles the methylamine group of glycine from the P protein to the T protein. In Paraburkholderia phytofirmans (strain DSM 17436 / LMG 22146 / PsJN) (Burkholderia phytofirmans), this protein is Glycine cleavage system H protein.